A 207-amino-acid polypeptide reads, in one-letter code: GTP cyclohydrolase 1 (207 aa).

The Zn(2+) site is built by Cys94, His97, and Cys167.

The protein belongs to the GTP cyclohydrolase I family. As to quaternary structure, toroid-shaped homodecamer, composed of two pentamers of five dimers.

The enzyme catalyses GTP + H2O = 7,8-dihydroneopterin 3'-triphosphate + formate + H(+). The protein operates within cofactor biosynthesis; 7,8-dihydroneopterin triphosphate biosynthesis; 7,8-dihydroneopterin triphosphate from GTP: step 1/1. The sequence is that of GTP cyclohydrolase 1 from Thermobifida fusca (strain YX).